Here is a 364-residue protein sequence, read N- to C-terminus: SVP1-like protein 2 (364 aa).

WD repeat units follow at residues 173–213 (AHDS…KICE) and 218–257 (YQHT…NTIR).

This sequence belongs to the WD repeat PROPPIN family.

It localises to the vacuole membrane. It is found in the cytoplasmic vesicle membrane. Its subcellular location is the preautophagosomal structure membrane. In terms of biological role, involved in mitochondrial or peroxisomal functions and amino acid signaling pathways. This chain is SVP1-like protein 2 (hsv2), found in Schizosaccharomyces pombe (strain 972 / ATCC 24843) (Fission yeast).